Here is a 223-residue protein sequence, read N- to C-terminus: UPF0441 protein YgiB (223 aa).

Residues 178–195 (TVPKTAMAPKPATTTTVT) are compositionally biased toward low complexity. Positions 178 to 223 (TVPKTAMAPKPATTTTVTRGGFGESVAKQSTMQRSATGTSSRSMGG) are disordered. Residues 204 to 223 (AKQSTMQRSATGTSSRSMGG) are compositionally biased toward polar residues.

The protein belongs to the UPF0441 family.

The chain is UPF0441 protein YgiB from Shigella dysenteriae serotype 1 (strain Sd197).